The primary structure comprises 466 residues: Asparagine--tRNA ligase (466 aa).

Belongs to the class-II aminoacyl-tRNA synthetase family. As to quaternary structure, homodimer.

It localises to the cytoplasm. The catalysed reaction is tRNA(Asn) + L-asparagine + ATP = L-asparaginyl-tRNA(Asn) + AMP + diphosphate + H(+). This is Asparagine--tRNA ligase from Shewanella sp. (strain MR-4).